Here is a 294-residue protein sequence, read N- to C-terminus: MKKPFEVIAIIGKPRDQQAIQTHRELYQWLSTEGYQVFVDDRLATILDDIPQEHFSSLIELGKRADLAIVVGGDGNMLGAARILSRFDISVIGVNRGNLGFLTDLNPENFQSALTDVLKGEFMEEERFLLETEIHRHGQIKSHNAALNEAVLHPGQVAHMIEFEVYIDDSFAFSQRSDGLIVSTPTGSTAYSLSGGGPILSSSLNAISLVPMFPHTLSSRPLVVDGKRRIKLIVSPDNRGTQEVSCDGQISLPVSPGDEIHIYQSPNVLKLIHPKDYNYYHVLRNKLGWSSKLF.

D74 (proton acceptor) is an active-site residue. Residues 74 to 75, 148 to 149, H159, R176, D178, 189 to 194, and Q249 each bind NAD(+); these read DG, NE, and TAYSLS.

Belongs to the NAD kinase family. A divalent metal cation serves as cofactor.

It localises to the cytoplasm. The catalysed reaction is NAD(+) + ATP = ADP + NADP(+) + H(+). In terms of biological role, involved in the regulation of the intracellular balance of NAD and NADP, and is a key enzyme in the biosynthesis of NADP. Catalyzes specifically the phosphorylation on 2'-hydroxyl of the adenosine moiety of NAD to yield NADP. In Vibrio atlanticus (strain LGP32) (Vibrio splendidus (strain Mel32)), this protein is NAD kinase.